The primary structure comprises 349 residues: Alcohol dehydrogenase 1 (349 aa).

Positions 46, 69, 100, 103, 106, 114, and 156 each coordinate Zn(2+). NAD(+)-binding positions include G180–G186, D204, K208, V270–L272, and R342.

It belongs to the zinc-containing alcohol dehydrogenase family. In terms of assembly, homotetramer. It depends on Zn(2+) as a cofactor.

The catalysed reaction is a primary alcohol + NAD(+) = an aldehyde + NADH + H(+). It catalyses the reaction a secondary alcohol + NAD(+) = a ketone + NADH + H(+). The sequence is that of Alcohol dehydrogenase 1 from Caenorhabditis elegans.